A 370-amino-acid polypeptide reads, in one-letter code: Histidinol-phosphate aminotransferase 1 (370 aa).

The residue at position 222 (K222) is an N6-(pyridoxal phosphate)lysine.

The protein belongs to the class-II pyridoxal-phosphate-dependent aminotransferase family. Histidinol-phosphate aminotransferase subfamily. In terms of assembly, homodimer. Requires pyridoxal 5'-phosphate as cofactor.

It catalyses the reaction L-histidinol phosphate + 2-oxoglutarate = 3-(imidazol-4-yl)-2-oxopropyl phosphate + L-glutamate. Its pathway is amino-acid biosynthesis; L-histidine biosynthesis; L-histidine from 5-phospho-alpha-D-ribose 1-diphosphate: step 7/9. The sequence is that of Histidinol-phosphate aminotransferase 1 (hisC1) from Bacillus cereus (strain ATCC 14579 / DSM 31 / CCUG 7414 / JCM 2152 / NBRC 15305 / NCIMB 9373 / NCTC 2599 / NRRL B-3711).